A 299-amino-acid chain; its full sequence is MGDKNKDDSSSQSKAVRKEKRAFLFRKWTRVDVMRVSAVGAVHLLCLLAPFNYTWEAFRFAAMVGISTNLSITFSYHRNLTHRSFKLPKWLEYPFAYSALFALQGHPIDWVSTHRFHHQFTDSDRDPHSPIEGFWFSHVFWIFDTSYIREKCGGRDNVMDLKQQWFYRFLQNTIGLHILTFWILVYLWGGLPYLTWSVGVGGAIGYHATWLINSACHIWGSRAWNTKDTSRNIWWLGPFTMGESWHNNHHAFEASARHGLEWYQVDLTWYLIWFFQVLGLATDVKLPTDAQKRKMSLAR.

2 helical membrane-spanning segments follow: residues 38–57 (AVGAVHLLCLLAPFNYTWEA) and 58–76 (FRFAAMVGISTNLSITFSY). The short motif at 77–82 (HRNLTH) is the Histidine box-1 element. The Histidine box-2 motif lies at 114 to 118 (HRFHH). A run of 2 helical transmembrane segments spans residues 174–194 (IGLHILTFWILVYLWGGLPYL) and 198–218 (VGVGGAIGYHATWLINSACHI). The Histidine box-3 signature appears at 246 to 250 (HNNHH). Residues 262 to 282 (WYQVDLTWYLIWFFQVLGLAT) traverse the membrane as a helical segment.

It belongs to the fatty acid desaturase type 1 family. Requires Fe cation as cofactor.

It is found in the endoplasmic reticulum membrane. It functions in the pathway lipid metabolism; polyunsaturated fatty acid biosynthesis. The sequence is that of Delta-9 desaturase-like 3 protein from Arabidopsis thaliana (Mouse-ear cress).